A 505-amino-acid polypeptide reads, in one-letter code: Lysine--tRNA ligase (505 aa).

2 residues coordinate Mg(2+): Glu-415 and Glu-422.

This sequence belongs to the class-II aminoacyl-tRNA synthetase family. In terms of assembly, homodimer. The cofactor is Mg(2+).

It localises to the cytoplasm. It catalyses the reaction tRNA(Lys) + L-lysine + ATP = L-lysyl-tRNA(Lys) + AMP + diphosphate. In Xanthomonas oryzae pv. oryzae (strain MAFF 311018), this protein is Lysine--tRNA ligase.